Reading from the N-terminus, the 965-residue chain is Sarcosine oxidase subunit alpha (965 aa).

Residues Ala139, Asp158, Glu159, Arg160, Thr166, Val205, Ala418, Leu423, and Thr425 each contribute to the NAD(+) site. Residues Thr692 and Glu784 each coordinate (6R)-5,10-methylene-5,6,7,8-tetrahydrofolate.

It belongs to the GcvT family. Heterotetramer composed of subunits alpha (SoxA), beta (SoxB), gamma (SoxG) and delta (SoxD). It depends on NAD(+) as a cofactor.

The protein localises to the cytoplasm. The catalysed reaction is sarcosine + (6S)-5,6,7,8-tetrahydrofolate + O2 = (6R)-5,10-methylene-5,6,7,8-tetrahydrofolate + glycine + H2O2. The enzyme catalyses sarcosine + O2 + H2O = formaldehyde + glycine + H2O2. Its activity is regulated as follows. Inhibited by Zn(2+), Cu(2+), Cd(2+), Hg(2+), Ag(+), p-chloromercuribenzoate (p-CMB), iodoacetamide, N-ethylmaleimide, CN(-), o-phenanthroline and sodium lauryl sulfate. Functionally, in the presence of tetrahydrofolate, catalyzes the oxidative demethylation of sarcosine to yield glycine, 5,10-methylenetetrahydrofolate and hydrogen peroxide. In the absence of tetrahydrofolate, catalyzes the oxidative demethylation of sarcosine to yield glycine, formaldehyde and hydrogen peroxide. Can also use N-methyl-L-alanine and N-ethyl-L-glycine. Is very specific for oxygen as an acceptor. This Corynebacterium sp. (strain U-96) protein is Sarcosine oxidase subunit alpha.